Consider the following 718-residue polypeptide: Tegument protein UL46 (718 aa).

Disordered regions lie at residues 433-510 (SAGP…EPPA) and 581-611 (TADD…DDES). Over residues 444–454 (GPGGHRAGGGT) the composition is skewed to gly residues. Positions 455–467 (CREKIQRARRDNE) are enriched in basic and acidic residues.

The protein belongs to the herpesviridae HHV-1 VP11/12 protein family. Interacts with VP16. Interacts with host LCK, PIK3R1, SHC1 AND GRB2; these interactions promote the activation of the PI3K/AKT pathway. Interacts with host YWHAB. Interacts with ICP0; this interaction targets UL46 for degradation by the proteasome. Interacts (via N-terminus) with host TMEM173. Interacts (via C-terminus) with host TBK1. Interacts with host DOK2. Phosphorylated by host LCK. The phosphorylation seems to be lymphocyte-specific.

The protein localises to the virion tegument. Its subcellular location is the host cytoplasm. It localises to the host cell membrane. Functionally, plays a role in the activation of the host PI3K/AKT pathway to promote cell survival. Interacts with and activates host LCK and thereby recruits downstream partners SHC1, GRB2 and PI3KR1 in order to activate the PI3K pathway by phosphorylating host AKT on its activating residues. This mechanism is inhibited by the viral protein US3 that instead promotes incorporation of UL46 into virions. Plays a role in the inhibition of TMEM173/STING-mediated type I interferon production. Interacts with host DOK2 and induces its degradation. This immune evasion mechanism to inactivate T-cells may play an important role during pathogenesis. The protein is Tegument protein UL46 of Homo sapiens (Human).